A 269-amino-acid chain; its full sequence is Peptide deformylase 1A, chloroplastic/mitochondrial (269 aa).

Residues 1–60 (MGLHRDEATAMETLFRVSLRLLPVSAAVTCRSIRFPVSRPGSSHLLNRKLYNLPTSSSSS) constitute a chloroplast and mitochondrion transit peptide. Substrate is bound by residues 123–126 (PGVG) and Gly-187. Residue Cys-188 participates in Zn(2+) binding. Positions 191–196 (VDGFRA) are dimerization. His-230 lines the Zn(2+) pocket. Glu-231 is an active-site residue. His-234 provides a ligand contact to Zn(2+). The interval 236 to 254 (DGNLYVDKMVPRTFRTVDN) is dimerization.

This sequence belongs to the polypeptide deformylase family. As to quaternary structure, homodimer. Zn(2+) is required as a cofactor. As to expression, expressed in roots, leaves, flowers and siliques.

Its subcellular location is the plastid. It is found in the chloroplast stroma. It localises to the mitochondrion. It catalyses the reaction N-terminal N-formyl-L-methionyl-[peptide] + H2O = N-terminal L-methionyl-[peptide] + formate. With respect to regulation, inhibited by actinonin. Functionally, removes the formyl group from the N-terminal Met of newly synthesized proteins. This chain is Peptide deformylase 1A, chloroplastic/mitochondrial (PDF1A), found in Arabidopsis thaliana (Mouse-ear cress).